A 90-amino-acid chain; its full sequence is Small ribosomal subunit protein uS15c (90 aa).

This sequence belongs to the universal ribosomal protein uS15 family. As to quaternary structure, part of the 30S ribosomal subunit.

It is found in the plastid. The protein localises to the chloroplast. The chain is Small ribosomal subunit protein uS15c (rps15) from Glycine max (Soybean).